A 443-amino-acid chain; its full sequence is Xaa-Pro dipeptidase (443 aa).

Residues aspartate 246, aspartate 257, histidine 339, glutamate 384, and glutamate 423 each coordinate Mn(2+).

Belongs to the peptidase M24B family. Bacterial-type prolidase subfamily. Requires Mn(2+) as cofactor.

The enzyme catalyses Xaa-L-Pro dipeptide + H2O = an L-alpha-amino acid + L-proline. In terms of biological role, splits dipeptides with a prolyl residue in the C-terminal position. The chain is Xaa-Pro dipeptidase from Escherichia coli O8 (strain IAI1).